A 311-amino-acid polypeptide reads, in one-letter code: MTALSRIPAFDAAETAALLDYPALLATLTHTVAEYAAGEIVSPERLVVPLQGGGVMLSMPSSARDLASHKLVNVCPGNAARGLPTILGQVSAYDATTGEMRFVLDGPTVTGRRTAAITALGIQALHGAAPRDILLIGTGKQAANHAEALAAIFPDARLHVRGSRAGSAAAFCAAHRAQAPQLAPLDGDAIPDAIDVVVTLTTSRTPVYREAAREGRLVVGVGAFTADAAEIDADTVRHSRLVVDDPAGARHEAGDLIVAQVDWQRVASLADVLRGAFERSGPLLFKTVGCAAWDLAACRTARDALDARRGG.

It belongs to the ornithine cyclodeaminase/mu-crystallin family.

The enzyme catalyses L-proline + NAD(+) = 1-pyrroline-2-carboxylate + NADH + H(+). It carries out the reaction L-proline + NADP(+) = 1-pyrroline-2-carboxylate + NADPH + H(+). Catalyzes the reduction of Delta(1)-pyrroline-2-carboxylate (Pyr2C) to L-proline, using preferentially NADPH over NADH as the electron donor. May be involved in a degradation pathway that converts trans-3-hydroxy-L-proline (t3LHyp) to L-proline. In Burkholderia ambifaria (strain ATCC BAA-244 / DSM 16087 / CCUG 44356 / LMG 19182 / AMMD) (Burkholderia cepacia (strain AMMD)), this protein is Delta(1)-pyrroline-2-carboxylate reductase 2.